Reading from the N-terminus, the 209-residue chain is uncharacterized protein (209 aa).

The signal sequence occupies residues 1-17 (MKRLVTGLLALSLFLAA). Residues 17–105 (ACGQDSDQQK…SNNQANNNQK (89 aa)) are disordered. Residue Cys18 is the site of N-palmitoyl cysteine attachment. The S-diacylglycerol cysteine moiety is linked to residue Cys18. Residues 23-70 (DQQKDSNKEKDDKAKTEQQDEKTNDSSKDKKDKKDDSKDVNKDNKDNS) show a composition bias toward basic and acidic residues. Low complexity predominate over residues 71–105 (ANDNQQQSNSNATNNDQNQTNNNQSSNNQANNNQK).

It is found in the cell membrane. This is an uncharacterized protein from Staphylococcus aureus (strain bovine RF122 / ET3-1).